Reading from the N-terminus, the 275-residue chain is Protein COFACTOR ASSEMBLY OF COMPLEX C SUBUNIT B CCB2, chloroplastic (275 aa).

The N-terminal 19 residues, 1 to 19 (MSIQICNFPFHPKFALQPR), are a transit peptide targeting the chloroplast. At 20–65 (AQRSTRIFARTENDSPQSKTSDQQLNLSVLRFTFGIPGFDESYLPR) the chain is on the stromal side. The helical transmembrane segment at 66–86 (WIGYGFGSLLLLNHFSASAPI) threads the bilayer. At 87–93 (SESQMRS) the chain is on the lumenal side. A helical transmembrane segment spans residues 94 to 114 (EALGLSLAAFSIALPYIGKFL). The Stromal segment spans residues 115–275 (KGSVVEQRSL…IGAMAEKFRG (161 aa)).

It localises to the plastid. The protein resides in the chloroplast thylakoid membrane. In terms of biological role, required for the biogenesis and accumulation of native cytochrome b6 in the thylakoid membrane. Controls the conversion of apocytochrome b6 to holocytochrome b6. Required for covalent binding of the c-type heme to cytochrome b6. The chain is Protein COFACTOR ASSEMBLY OF COMPLEX C SUBUNIT B CCB2, chloroplastic from Arabidopsis thaliana (Mouse-ear cress).